The following is a 401-amino-acid chain: Argininosuccinate synthase (401 aa).

Residues 7 to 15 (AYSGGLDTS) and Ala34 each bind ATP. Tyr85 and Ser90 together coordinate L-citrulline. Gly115 provides a ligand contact to ATP. Positions 117, 121, and 122 each coordinate L-aspartate. Asn121 serves as a coordination point for L-citrulline. Positions 125, 174, 183, 259, and 271 each coordinate L-citrulline.

This sequence belongs to the argininosuccinate synthase family. Type 1 subfamily. As to quaternary structure, homotetramer.

The protein localises to the cytoplasm. The enzyme catalyses L-citrulline + L-aspartate + ATP = 2-(N(omega)-L-arginino)succinate + AMP + diphosphate + H(+). It functions in the pathway amino-acid biosynthesis; L-arginine biosynthesis; L-arginine from L-ornithine and carbamoyl phosphate: step 2/3. The sequence is that of Argininosuccinate synthase from Pelotomaculum thermopropionicum (strain DSM 13744 / JCM 10971 / SI).